The sequence spans 881 residues: DNA mismatch repair protein MutS (881 aa).

Residue 626–633 participates in ATP binding; sequence GPNMAGKS.

Belongs to the DNA mismatch repair MutS family.

In terms of biological role, this protein is involved in the repair of mismatches in DNA. It is possible that it carries out the mismatch recognition step. This protein has a weak ATPase activity. This Desulfosudis oleivorans (strain DSM 6200 / JCM 39069 / Hxd3) (Desulfococcus oleovorans) protein is DNA mismatch repair protein MutS.